The primary structure comprises 320 residues: Ribosomal RNA small subunit methyltransferase H (320 aa).

S-adenosyl-L-methionine is bound by residues Gly-36–His-38, Asp-56, Phe-82, Asp-103, and Gln-110.

This sequence belongs to the methyltransferase superfamily. RsmH family.

The protein localises to the cytoplasm. It catalyses the reaction cytidine(1402) in 16S rRNA + S-adenosyl-L-methionine = N(4)-methylcytidine(1402) in 16S rRNA + S-adenosyl-L-homocysteine + H(+). Its function is as follows. Specifically methylates the N4 position of cytidine in position 1402 (C1402) of 16S rRNA. This Chromobacterium violaceum (strain ATCC 12472 / DSM 30191 / JCM 1249 / CCUG 213 / NBRC 12614 / NCIMB 9131 / NCTC 9757 / MK) protein is Ribosomal RNA small subunit methyltransferase H.